A 242-amino-acid chain; its full sequence is Caffeoyl-CoA O-methyltransferase 4 (242 aa).

Lys16 contributes to the substrate binding site. Residues Thr58, Glu80, Gly82–Val83, Ser88, Asp106, and Ala135 contribute to the S-adenosyl-L-methionine site. Asp158 is a substrate binding site. Residue Asp158 coordinates a divalent metal cation. Asp160 is an S-adenosyl-L-methionine binding site. Residues Asp184 and Asn185 each coordinate a divalent metal cation. Position 189 (Asn189) interacts with substrate.

Belongs to the class I-like SAM-binding methyltransferase superfamily. Cation-dependent O-methyltransferase family. CCoAMT subfamily. Requires Mg(2+) as cofactor. As to expression, mostly expressed in the bottom and middle parts of the stems.

It carries out the reaction (E)-caffeoyl-CoA + S-adenosyl-L-methionine = (E)-feruloyl-CoA + S-adenosyl-L-homocysteine + H(+). Its pathway is aromatic compound metabolism; phenylpropanoid biosynthesis. In terms of biological role, methylates caffeoyl-CoA to feruloyl-CoA and 5-hydroxyferuloyl-CoA to sinapoyl-CoA. Plays a role in the synthesis of feruloylated polysaccharides. Involved in the reinforcement of the plant cell wall. Also involved in the responding to wounding or pathogen challenge by the increased formation of cell wall-bound ferulic acid polymers. The sequence is that of Caffeoyl-CoA O-methyltransferase 4 (CCOAOMT4) from Nicotiana tabacum (Common tobacco).